We begin with the raw amino-acid sequence, 248 residues long: Triosephosphate isomerase (248 aa).

Substrate-binding residues include N10 and K12. The active-site Electrophile is H95. E165 serves as the catalytic Proton acceptor.

The protein belongs to the triosephosphate isomerase family. Homodimer.

It catalyses the reaction D-glyceraldehyde 3-phosphate = dihydroxyacetone phosphate. It functions in the pathway carbohydrate biosynthesis; gluconeogenesis. Its pathway is carbohydrate degradation; glycolysis; D-glyceraldehyde 3-phosphate from glycerone phosphate: step 1/1. This is Triosephosphate isomerase (TPI1) from Debaryomyces hansenii (strain ATCC 36239 / CBS 767 / BCRC 21394 / JCM 1990 / NBRC 0083 / IGC 2968) (Yeast).